The sequence spans 327 residues: Small ribosomal subunit protein uS2 (327 aa).

The segment at Ala258–Glu327 is disordered.

This sequence belongs to the universal ribosomal protein uS2 family.

This is Small ribosomal subunit protein uS2 from Anaplasma marginale (strain St. Maries).